Consider the following 88-residue polypeptide: Small ribosomal subunit protein uS17 (88 aa).

The protein belongs to the universal ribosomal protein uS17 family. In terms of assembly, part of the 30S ribosomal subunit.

Functionally, one of the primary rRNA binding proteins, it binds specifically to the 5'-end of 16S ribosomal RNA. The sequence is that of Small ribosomal subunit protein uS17 from Ruthia magnifica subsp. Calyptogena magnifica.